The primary structure comprises 579 residues: Pre-mRNA-processing factor 17 (579 aa).

The span at 1–19 (MSAAIAALAASYGSGSGSE) shows a compositional bias: low complexity. Disordered regions lie at residues 1-34 (MSAAIAALAASYGSGSGSESDSDSEGSRCPLPAA) and 204-237 (DVAKPSEEEQKELDEITAKRQKKGKQEEEKPGEE). WD repeat units lie at residues 286 to 326 (GHTK…RCLR), 330 to 369 (GHSKAVRDICFNTAGTQFLSAAYDRYLKLWDTETGQCISR), 371 to 413 (TNRK…IVQE), 416 to 455 (RHLGAVNTIVFVDENRRFVSTSDDKSLRVWEWDIPVDFKY), 459 to 498 (PSMHSMPAVTLSPNGKWLACQSMDNQILIFGAQNRFRLNK), 504 to 545 (GHMV…LYSR), and 548 to 578 (AHDKVCIGAVWHPHETSKVITCGWDGLIKLW).

As to quaternary structure, component of the catalytic spliceosome C complexes. Component of the postcatalytic spliceosome P complex. Interacts with PPIL1; this interaction leads to CDC40 isomerization. Post-translationally, undergoes isomerization of the peptide bond between Gly-94 and Pro-95. The reaction is catalyzed by PPIL1.

Its subcellular location is the nucleus. The protein resides in the nucleus speckle. In terms of biological role, required for pre-mRNA splicing as component of the activated spliceosome. Plays an important role in embryonic brain development; this function does not require proline peptide bond isomerization. In Mus musculus (Mouse), this protein is Pre-mRNA-processing factor 17 (Cdc40).